A 162-amino-acid chain; its full sequence is UPF0178 protein Rsph17029_2512 (162 aa).

This sequence belongs to the UPF0178 family.

The protein is UPF0178 protein Rsph17029_2512 of Cereibacter sphaeroides (strain ATCC 17029 / ATH 2.4.9) (Rhodobacter sphaeroides).